The primary structure comprises 308 residues: GTP-binding protein RAD (308 aa).

Over residues 1–16 the composition is skewed to gly residues; that stretch reads MTLNGGGSGAGGSRGG. Residues 1–88 form a disordered region; that stretch reads MTLNGGGSGA…SLSSGGSDSD (88 aa). An Omega-N-methylarginine modification is found at Arg24. Phosphoserine is present on Ser26. Residues 48-68 are compositionally biased toward low complexity; it reads QAALTPGALTAAAAGTGTQGP. GTP-binding positions include 98 to 105 and 203 to 206; these read GAPGVGKS and NKSD. The tract at residues 278-297 is calmodulin-binding; the sequence is AKRFLGRIVARNSRKMAFRA.

The protein belongs to the small GTPase superfamily. RGK family. As to quaternary structure, interacts with calmodulin preferentially in the inactive, GDP-bound form. Binds CAMKII which is capable of phosphorylating RAD in vitro. Interacts with CAMK2D. Interacts with CACNB2; interaction may be involved in beta-adrenergic regulation of heart rate and contractile force. Interaction with CACNB2 regulates the trafficking of CACNA1C to the cell membrane. As to expression, most abundantly expressed in the heart. Also found in the skeletal muscle and lung. Lesser amounts in placenta and kidney. Also detected in adipose tissue. Overexpressed in muscle of type II diabetic humans.

The protein localises to the cell membrane. Its function is as follows. May regulate basal voltage-dependent L-type Ca(2+) currents and be required for beta-adrenergic augmentation of Ca(2+) influx in cardiomyocytes, thereby regulating increases in heart rate and contractile force. May play an important role in cardiac antiarrhythmia via the strong suppression of voltage-gated L-type Ca(2+) currents. Regulates voltage-dependent L-type calcium channel subunit alpha-1C trafficking to the cell membrane. Inhibits cardiac hypertrophy through the calmodulin-dependent kinase II (CaMKII) pathway. Inhibits phosphorylation and activation of CAMK2D. This chain is GTP-binding protein RAD (RRAD), found in Homo sapiens (Human).